Here is a 758-residue protein sequence, read N- to C-terminus: MAVSARPARAPRGPDKVKKDKAAQTSGPRQGSQMGKLLGFEWTDVSSWERLVTLLNRPTDPASLAVFRFLFGLMMVLDIPQERGLSSLDRRYLDGLEVCRFPLLDALQPLPLDWMYLVYTIMFLGALGMMLGLCYRISCVLFLLPYWYVFLLDKTSWNNHSYLYGLLAFQLTFVDAHHYWSVDGLLRARKRNAHVPLWNYAVLRGQIFIVYFIAGIKKLDADWVEGYSMEYLSRHWLFSPFKLVLSEEMTSLLVVHWCGLLLDLSAGFLLFFDASRPIGFVFVSYFHCMNSQLFSIGMFPYVMLASSPLFCSPEWPRKLVAHCPKKLQELLPLRTAPQPSTSCMYKRSRARGSQKPGLRHQLSTAFTLLYLLEQLFLPYSHFLTQGYNNWTNGLYGYSWDMMVHSRSHQHVKITYRDGRTGELGYLNPGVFTQSRRWKDHADMLKQYATCLSRLLPKYNVTEPQIYFDIWVSINDRFQQRIFDPRVDIVQAAWSPFQRTPWLQPLLMDLSPWRTKLQEIKSSLDNHTEVVFIADFPGLHLENFVSEDLGNTSIQLLQGEVTVELVAEQKNQTLQEGEKMQLPAGEYHKVYTVSSSPSCYMYIYVNTTEVALEQDLAYLQELKEKVENGSETGPLPPELQPLLEGEVKGGPEPTPLVQTFLRRQQRLQEIERRRNAPFYERFVRFLLRKLFIFRRSFLMTCISLRNLALGRPSLEQLAQEVTYANLRPFEPAGEPSPVNTDSSNPNPPEPDSHPVHSEF.

A disordered region spans residues 1 to 34 (MAVSARPARAPRGPDKVKKDKAAQTSGPRQGSQM). Ala-2 is modified (N-acetylalanine). At 2-60 (AVSARPARAPRGPDKVKKDKAAQTSGPRQGSQMGKLLGFEWTDVSSWERLVTLLNRPTD) the chain is on the cytoplasmic side. Residues 12 to 22 (RGPDKVKKDKA) show a composition bias toward basic and acidic residues. Positions 23–33 (AQTSGPRQGSQ) are enriched in polar residues. The helical transmembrane segment at 61–81 (PASLAVFRFLFGLMMVLDIPQ) threads the bilayer. At 82–113 (ERGLSSLDRRYLDGLEVCRFPLLDALQPLPLD) the chain is on the lumenal side. Cys-99 and Cys-450 form a disulfide bridge. The helical transmembrane segment at 114–134 (WMYLVYTIMFLGALGMMLGLC) threads the bilayer. Topologically, residues 135 to 136 (YR) are cytoplasmic. A helical transmembrane segment spans residues 137 to 157 (ISCVLFLLPYWYVFLLDKTSW). Topologically, residues 158-292 (NNHSYLYGLL…VSYFHCMNSQ (135 aa)) are lumenal. The chain crosses the membrane as a helical span at residues 293 to 313 (LFSIGMFPYVMLASSPLFCSP). At 314–361 (EWPRKLVAHCPKKLQELLPLRTAPQPSTSCMYKRSRARGSQKPGLRHQ) the chain is on the cytoplasmic side. Residues 362-382 (LSTAFTLLYLLEQLFLPYSHF) traverse the membrane as a helical segment. Topologically, residues 383–758 (LTQGYNNWTN…PDSHPVHSEF (376 aa)) are lumenal. Residues 726–758 (RPFEPAGEPSPVNTDSSNPNPPEPDSHPVHSEF) form a disordered region. A compositionally biased stretch (basic and acidic residues) spans 749–758 (PDSHPVHSEF).

Belongs to the vitamin K-dependent gamma-carboxylase family. Monomer. May interact with CALU.

It is found in the endoplasmic reticulum membrane. It catalyses the reaction 4-carboxy-L-glutamyl-[protein] + 2,3-epoxyphylloquinone + H2O + H(+) = phylloquinol + L-glutamyl-[protein] + CO2 + O2. Its function is as follows. Mediates the vitamin K-dependent carboxylation of glutamate residues to calcium-binding gamma-carboxyglutamate (Gla) residues with the concomitant conversion of the reduced hydroquinone form of vitamin K to vitamin K epoxide. Catalyzes gamma-carboxylation of various proteins, such as blood coagulation factors (F2, F7, F9 and F10), osteocalcin (BGLAP) or matrix Gla protein (MGP). The protein is Vitamin K-dependent gamma-carboxylase (GGCX) of Ovis aries (Sheep).